A 123-amino-acid polypeptide reads, in one-letter code: Protein Wnt-7b (123 aa).

A lipid anchor (O-palmitoleoyl serine; by PORCN) is attached at serine 1. The tract at residues 33–61 (VEVVRASRLRQPTFLKIKQIRSYQKPMET) is disordered linker. Cysteine 89 and cysteine 104 form a disulfide bridge. A glycan (N-linked (GlcNAc...) asparagine) is linked at asparagine 90.

It belongs to the Wnt family. Post-translationally, palmitoleoylation is required for efficient binding to frizzled receptors. Depalmitoleoylation leads to Wnt signaling pathway inhibition.

The protein localises to the secreted. It localises to the extracellular space. Its subcellular location is the extracellular matrix. Ligand for members of the frizzled family of seven transmembrane receptors that functions in the canonical Wnt/beta-catenin signaling pathway. Required for normal fusion of the chorion and the allantois during placenta development. Required for central nervous system (CNS) angiogenesis and blood-brain barrier regulation. The sequence is that of Protein Wnt-7b (WNT-7B) from Sceloporus occidentalis (Western fence lizard).